Here is a 212-residue protein sequence, read N- to C-terminus: Ribonuclease HII (212 aa).

Residues 1–206 (MILVGIDEAG…LQDIAPNYYI (206 aa)) enclose the RNase H type-2 domain. A divalent metal cation contacts are provided by D7, E8, and D104.

This sequence belongs to the RNase HII family. Requires Mn(2+) as cofactor. Mg(2+) serves as cofactor.

The protein localises to the cytoplasm. The catalysed reaction is Endonucleolytic cleavage to 5'-phosphomonoester.. Functionally, endonuclease that specifically degrades the RNA of RNA-DNA hybrids. This is Ribonuclease HII from Sulfolobus acidocaldarius (strain ATCC 33909 / DSM 639 / JCM 8929 / NBRC 15157 / NCIMB 11770).